A 416-amino-acid polypeptide reads, in one-letter code: Multifunctional CCA protein (416 aa).

The ATP site is built by Gly8 and Arg11. Residues Gly8 and Arg11 each coordinate CTP. Asp21 and Asp23 together coordinate Mg(2+). 3 residues coordinate ATP: Arg91, Arg137, and Arg140. CTP is bound by residues Arg91, Arg137, and Arg140. In terms of domain architecture, HD spans 228 to 329; it reads TGVHTLMVLA…VKIFDKADFW (102 aa).

This sequence belongs to the tRNA nucleotidyltransferase/poly(A) polymerase family. Bacterial CCA-adding enzyme type 1 subfamily. Monomer. Can also form homodimers and oligomers. Mg(2+) serves as cofactor. Requires Ni(2+) as cofactor.

It catalyses the reaction a tRNA precursor + 2 CTP + ATP = a tRNA with a 3' CCA end + 3 diphosphate. The catalysed reaction is a tRNA with a 3' CCA end + 2 CTP + ATP = a tRNA with a 3' CCACCA end + 3 diphosphate. Catalyzes the addition and repair of the essential 3'-terminal CCA sequence in tRNAs without using a nucleic acid template. Adds these three nucleotides in the order of C, C, and A to the tRNA nucleotide-73, using CTP and ATP as substrates and producing inorganic pyrophosphate. tRNA 3'-terminal CCA addition is required both for tRNA processing and repair. Also involved in tRNA surveillance by mediating tandem CCA addition to generate a CCACCA at the 3' terminus of unstable tRNAs. While stable tRNAs receive only 3'-terminal CCA, unstable tRNAs are marked with CCACCA and rapidly degraded. The sequence is that of Multifunctional CCA protein from Shewanella baltica (strain OS185).